Here is a 55-residue protein sequence, read N- to C-terminus: MIFRSIFKKFSTEEEETKKKSVAKTNSFWFILISASSFLIYSLFHKKRLLGTATA.

Residues 27 to 44 (SFWFILISASSFLIYSLF) form a helical membrane-spanning segment.

It localises to the membrane. This is an uncharacterized protein from Dictyostelium discoideum (Social amoeba).